The primary structure comprises 72 residues: Cell division protein ZapB (72 aa).

Positions 3 to 71 form a coiled coil; that stretch reads LSIIDQLEEK…LRSLLGQIDN (69 aa).

It belongs to the ZapB family. In terms of assembly, homodimer. The ends of the coiled-coil dimer bind to each other, forming polymers. Interacts with FtsZ.

The protein resides in the cytoplasm. Functionally, non-essential, abundant cell division factor that is required for proper Z-ring formation. It is recruited early to the divisome by direct interaction with FtsZ, stimulating Z-ring assembly and thereby promoting cell division earlier in the cell cycle. Its recruitment to the Z-ring requires functional FtsA or ZipA. The chain is Cell division protein ZapB from Haemophilus ducreyi (strain 35000HP / ATCC 700724).